We begin with the raw amino-acid sequence, 131 residues long: Small ribosomal subunit protein uS11 (131 aa).

It belongs to the universal ribosomal protein uS11 family. As to quaternary structure, part of the 30S ribosomal subunit. Interacts with proteins S7 and S18. Binds to IF-3.

Functionally, located on the platform of the 30S subunit, it bridges several disparate RNA helices of the 16S rRNA. Forms part of the Shine-Dalgarno cleft in the 70S ribosome. In Granulibacter bethesdensis (strain ATCC BAA-1260 / CGDNIH1), this protein is Small ribosomal subunit protein uS11.